Reading from the N-terminus, the 481-residue chain is MSTICPPPSPAVAKTEIALSGESPLLAATFAYWDNILGPRVRHIWAPKTDQVLLSDGEITFLANHTLNGEILRNAESGAIDVKFFVLSEKGVIIVSLIFDGNWNGDRSTYGLSIILPQTELSFYLPLHRVCVDRLTHIIRKGRIWMHKERQENVQKIVLEGTERMEDQGQSIIPMLTGEVIPVMELLASMRSHSVPEDLDIADTVLNDDDIGDSCHEGFLLNAISSHLQTCGCSVVVGSSAEKVNKIVRTLCLFLTPAERKCSRLCEAESSFKYESGLFVQGLLKDATGSFVLPFRQVMYAPYPTTHIDVDVNTVKQMPPCHEHIYNQRRYMRSELTAFWRATSEEDMAQDTIIYTDESFTPDLNIFQDVLHRDTLVKAFLDQVFHLKPGLSLRSTFLAQFLLILHRKALTLIKYIEDDTQKGKKPFKSLRNLKIDLDLTAEGDLNIIMALAEKIKPGLHSFIFGRPFYTSVQERDVLMTF.

The 172-residue stretch at 23–194 folds into the uDENN C9ORF72-type domain; the sequence is SPLLAATFAY…ELLASMRSHS (172 aa). Residues 200–343 enclose the cDENN C9ORF72-type domain; sequence DIADTVLNDD…SELTAFWRAT (144 aa). One can recognise a dDENN C9ORF72-type domain in the interval 370–464; the sequence is VLHRDTLVKA…IKPGLHSFIF (95 aa). A required for the homodimerization of the C9orf72-SMCR8 complex region spans residues 461–481; it reads SFIFGRPFYTSVQERDVLMTF.

As to quaternary structure, component of the C9orf72-SMCR8 complex, at least composed of C9orf72, SMCR8 and WDR41. The complex is formed of two protomers, each individually consisting of one molecule each of C9orf72, SMCR8 and WDR41. The protomers homodimerize via an interaction between C9orf72 (via C-terminus) and SMCR8 (via N-terminus). Within each protomer SMCR8 (via DENN domain) acts as a bridging protein between WDR41 (via C-terminus and N-terminus) and C9orf72 (via C-terminus). The C9orf72-SMCR8 complex associates with the ULK1/ATG1 kinase complex. Interacts with ULK1/ATG1 kinase complex members ULK1, ATG13 and RB1CC1. Interacts with SMCR8; the interaction is direct. Interacts with HNRNPA1, HNRNPA2B1 and UBQLN2. Interacts with small Rab GTPase RAB1A; the interaction mediates recruitment of RAB1A to the ULK1/ATG1 kinase complex. Also interacts with small Rab GTPase RAB7A. Interacts with cofilin. Interacts with GTP-binding proteins ARF1 and ARF6. Interacts with the DLG4/PSD-95. Interacts with CARM1 (via PH domain-like fold). Interacts with RAB39A and RAB39B (in GDP-bound forms); functions as GEF for RAB39A and RAB39B.

Its subcellular location is the nucleus. The protein resides in the cytoplasm. It localises to the P-body. It is found in the stress granule. The protein localises to the endosome. Its subcellular location is the lysosome. The protein resides in the cytoplasmic vesicle. It localises to the autophagosome. It is found in the autolysosome. The protein localises to the secreted. Its subcellular location is the cell projection. The protein resides in the axon. It localises to the growth cone. It is found in the perikaryon. Its function is as follows. Acts as a guanine-nucleotide releasing factor (GEF) for Rab GTPases by promoting the conversion of inactive RAB-GDP to the active form RAB-GTP. Acts as a GEF for RAB39A which enables HOPS-mediated autophagosome-lysosome membrane tethering and fusion in mammalian autophagy. Component of the C9orf72-SMCR8 complex where both subunits display GEF activity and that regulates autophagy. As part of the C9orf72-SMCR8-WDR41 (CSW) complex, functions as GEF for RAB8A and RAB39B, thereby promoting autophagosome maturation. As part of the C9orf72-SMCR8 complex, also functions as GTPase activating protein (GAP) for RAB8A and RAB11A in vitro. The C9orf72-SMCR8 complex also acts as a regulator of autophagy initiation by interacting with the ULK1/ATG1 kinase complex and modulating its protein kinase activity. Promotes initiation of autophagy by regulating the RAB1A-dependent trafficking of the ULK1/ATG1 kinase complex to the phagophore which leads to autophagosome formation. Acts as a regulator of mTORC1 signaling by promoting phosphorylation of mTORC1 substrates. Plays a role in endosomal trafficking. May be involved in regulating the maturation of phagosomes to lysosomes. Promotes the lysosomal localization and lysosome-mediated degradation of CARM1 which leads to inhibition of starvation-induced lipid metabolism. Regulates actin dynamics in motor neurons by inhibiting the GTP-binding activity of ARF6, leading to ARF6 inactivation. This reduces the activity of the LIMK1 and LIMK2 kinases which are responsible for phosphorylation and inactivation of cofilin, leading to CFL1/cofilin activation. Positively regulates axon extension and axon growth cone size in spinal motor neurons. Required for SMCR8 protein expression and localization at pre- and post-synaptic compartments in the forebrain, also regulates protein abundance of RAB3A and GRIA1/GLUR1 in post-synaptic compartments in the forebrain and hippocampus. Plays a role within the hematopoietic system in restricting inflammation and the development of autoimmunity. In Rattus norvegicus (Rat), this protein is Guanine nucleotide exchange factor C9orf72 homolog.